The primary structure comprises 32 residues: Trypsin inhibitor 2b (32 aa).

Disulfide bonds link cysteine 3-cysteine 20, cysteine 10-cysteine 22, and cysteine 16-cysteine 29.

The protein belongs to the protease inhibitor I7 (squash-type serine protease inhibitor) family.

The protein resides in the secreted. In terms of biological role, inhibits trypsin. The polypeptide is Trypsin inhibitor 2b (Cucumis sativus (Cucumber)).